Here is a 296-residue protein sequence, read N- to C-terminus: Dof zinc finger protein DOF3.7 (296 aa).

The segment at 41-69 (NTRPNATASNGGSGGNTNNTATMETRKAR) is disordered. The span at 45–62 (NATASNGGSGGNTNNTAT) shows a compositional bias: low complexity. The segment at 74 to 128 (VNCPRCNSTNTKFCYYNNYSLTQPRYFCKGCRRYWTEGGSLRNVPVGGSSRKNKR) adopts a Dof-type zinc-finger fold. Zn(2+) contacts are provided by Cys76, Cys79, Cys101, and Cys104. The tract at residues 115 to 146 (RNVPVGGSSRKNKRSSTPLASPSNPKLPDLNP) is disordered. A compositionally biased stretch (polar residues) spans 129–138 (SSTPLASPSN).

As to expression, expressed in the phloem of the mother plant, including in roots, stem, leaves and flowers, but not present in the seed and embryo. In maturing siliques, found all through the funiculus connecting the placenta to the ovule, but not in the ovule.

The protein resides in the nucleus. Functionally, transcription factor specifically involved in the maternal control of seed germination. Regulates transcription by binding to a 5'-AA[AG]G-3' consensus core sequence. May ensure the inactivity of a component that would be activated to trigger germination as a consequence of red light perception. This is Dof zinc finger protein DOF3.7 (DOF3.7) from Arabidopsis thaliana (Mouse-ear cress).